A 2602-amino-acid chain; its full sequence is Non-reducing polyketide synthase SAT8 (2602 aa).

Residue Cys130 is the Nucleophile; for transacylase activity of the active site. His249 acts as the Proton donor/acceptor; for transacylase activity in catalysis. The tract at residues 379-398 (MLENSTSPPSPAATSSNSHC) is disordered. Residues 382–396 (NSTSPPSPAATSSNS) are compositionally biased toward low complexity. The region spanning 404–822 (PRDIAIVGMS…GSNAAMVVTQ (419 aa)) is the Ketosynthase family 3 (KS3) domain. Catalysis depends on for beta-ketoacyl synthase activity residues Cys571, His706, and His745. Residues 926 to 1216 (FGGQMSTFVG…AMARRSLDSN (291 aa)) are malonyl-CoA:ACP transacylase (MAT). Positions 1298–1442 (GPLFGLLTFV…GKLDLLSSSE (145 aa)) are N-terminal hotdog fold. Residues 1298 to 1618 (GPLFGLLTFV…YTRIPRHSMT (321 aa)) form the PKS/mFAS DH domain. Positions 1331–1616 (LVIPHIIART…IAYTRIPRHS (286 aa)) are product template (PT) domain. The active-site Proton acceptor; for dehydratase activity is the His1335. A C-terminal hotdog fold region spans residues 1467–1618 (GDVSGLQGRS…YTRIPRHSMT (152 aa)). The active-site Proton donor; for dehydratase activity is the Asp1524. A Carrier domain is found at 1658–1733 (DTLKQTVGQI…AFVRYISKVV (76 aa)). An O-(pantetheine 4'-phosphoryl)serine modification is found at Ser1692. The disordered stretch occupies residues 1737-1772 (DDLGTPSHSDNDSHVTGTTATPNSSSASSDTHHGNS). Over residues 1752 to 1765 (TGTTATPNSSSASS) the composition is skewed to low complexity. Residues 1979 to 2150 (VEKVKDDFQG…GYGHVDWTDG (172 aa)) are methyltransferase domain. The NADPH-binding domain stretch occupies residues 2229–2530 (IVVVTGATGS…IPLGEWVRKV (302 aa)).

The cofactor is pantetheine 4'-phosphate.

The protein operates within mycotoxin biosynthesis. In terms of biological role, non-reducing polyketide synthase; part of the satratoxin SC1 cluster involved in the biosynthesis of satratoxins, trichothecene mycotoxins that are associated with human food poisonings. Satratoxins are suggested to be made by products of multiple gene clusters (SC1, SC2 and SC3) that encode 21 proteins in all, including polyketide synthases, acetyltransferases, and other enzymes expected to modify the trichothecene skeleton. SC1 encodes 10 proteins, SAT1 to SAT10. The largest are SAT8, which encodes a putative polyketide synthase (PKS) with a conventional non-reducing architecture, and SAT10, a putative protein containing four ankyrin repeats and thus may be involved in protein scaffolding. The putative short-chain reductase SAT3 may assist the PKS in some capacity. SAT6 contains a secretory lipase domain and acts probably as a trichothecene esterase. SAT5 encodes a putative acetyltransferase, and so, with SAT6, may affect endogenous protection from toxicity. The probable transcription factor SAT9 may regulate the expression of the SC1 cluster. SC2 encodes proteins SAT11 to SAT16, the largest of which encodes the putative reducing PKS SAT13. SAT11 is a cytochrome P450 monooxygenase, while SAT14 and SAT16 are probable acetyltransferases. The SC2 cluster may be regulated by the transcription factor SAT15. SC3 is a small cluster that encodes 5 proteins, SAT17 to SAT21. SAT21 is a putative MFS-type transporter which may have a role in exporting secondary metabolites. The four other proteins putatively encoded in SC3 include the taurine hydroxylase-like protein SAT17, the O-methyltransferase SAT18, the acetyltransferase SAT19, and the Cys6-type zinc finger SAT20, the latter being probably involved in regulation of SC3 expression. The chain is Non-reducing polyketide synthase SAT8 from Stachybotrys chartarum (strain CBS 109288 / IBT 7711) (Toxic black mold).